The primary structure comprises 202 residues: Small ribosomal subunit protein uS4 (202 aa).

Positions 15-42 (LGDLPGLTRKAAKRSYPPGQHGQARRKR) are disordered. An S4 RNA-binding domain is found at 90 to 152 (NRLDNVCFRL…KCSKQLAEGN (63 aa)).

Belongs to the universal ribosomal protein uS4 family. In terms of assembly, part of the 30S ribosomal subunit. Contacts protein S5. The interaction surface between S4 and S5 is involved in control of translational fidelity.

One of the primary rRNA binding proteins, it binds directly to 16S rRNA where it nucleates assembly of the body of the 30S subunit. Its function is as follows. With S5 and S12 plays an important role in translational accuracy. The chain is Small ribosomal subunit protein uS4 from Synechococcus sp. (strain WH7803).